The primary structure comprises 331 residues: UPF0194 membrane protein CKO_02332 (331 aa).

A signal peptide spans 1-15 (MKKPVVIALAVAALA). Positions 142-207 (ISANDLENAR…ELDLQDTTLI (66 aa)) form a coiled coil.

It belongs to the UPF0194 family.

It is found in the periplasm. The chain is UPF0194 membrane protein CKO_02332 from Citrobacter koseri (strain ATCC BAA-895 / CDC 4225-83 / SGSC4696).